Here is a 298-residue protein sequence, read N- to C-terminus: Homoserine kinase (298 aa).

79–89 (PIARGLGSSGA) contributes to the ATP binding site.

Belongs to the GHMP kinase family. Homoserine kinase subfamily.

It is found in the cytoplasm. The enzyme catalyses L-homoserine + ATP = O-phospho-L-homoserine + ADP + H(+). Its pathway is amino-acid biosynthesis; L-threonine biosynthesis; L-threonine from L-aspartate: step 4/5. Catalyzes the ATP-dependent phosphorylation of L-homoserine to L-homoserine phosphate. The protein is Homoserine kinase of Pyrobaculum islandicum (strain DSM 4184 / JCM 9189 / GEO3).